Here is a 215-residue protein sequence, read N- to C-terminus: MRGVAEEKTLLEVIIQELRRAAEEESRRIVKEAEQEAQKIVEEAIQKAEAIKAEKLNQLLNEYRQKAMAELAPKRLELRHRAIREKHELIESALNRAIEEAVKTILGNDDYRRTFLEKSLEKGVVALSSTDLVVHPCRGSASIVGQVVEAVAARLSKVKPGLRLEIGDPLGCTEGVVIVSRDGREIYNATLEAKIAEVRESVKPKVLELVSRARA.

It belongs to the V-ATPase E subunit family. Has multiple subunits with at least A(3), B(3), C, D, E, F, H, I and proteolipid K(x).

It localises to the cell membrane. In terms of biological role, component of the A-type ATP synthase that produces ATP from ADP in the presence of a proton gradient across the membrane. The protein is A-type ATP synthase subunit E of Thermofilum pendens (strain DSM 2475 / Hrk 5).